The primary structure comprises 204 residues: Putative rubrerythrin (204 aa).

Positions 1-159 constitute a Ferritin-like diiron domain; sequence MINNFFVINM…KLLKEVEEGT (159 aa). 10 residues coordinate Fe(3+): Glu24, Glu57, Glu107, Glu110, Glu141, His144, Cys171, Cys174, Cys187, and Cys190. Residues 166–204 form the Rubredoxin-like domain; the sequence is PVEWVCRKCGFVHLGKEPPEKCPSCSHPRKYFEVKCEKY.

As to quaternary structure, homodimer. Possesses two rubredoxin-like centers and two non-sulfur oxo-bridged di-iron centers per dimer. It depends on Fe(3+) as a cofactor.

It localises to the cytoplasm. In terms of biological role, may provide oxidative stress protection via catalytic reduction of intracellular hydrogen peroxide. The sequence is that of Putative rubrerythrin from Methanocaldococcus jannaschii (strain ATCC 43067 / DSM 2661 / JAL-1 / JCM 10045 / NBRC 100440) (Methanococcus jannaschii).